The sequence spans 242 residues: Triosephosphate isomerase (242 aa).

8–10 (NWK) serves as a coordination point for substrate. Catalysis depends on H98, which acts as the Electrophile. The active-site Proton acceptor is the E167. Substrate is bound by residues G173, S205, and 226 to 227 (GG).

It belongs to the triosephosphate isomerase family. Homodimer.

It is found in the cytoplasm. The catalysed reaction is D-glyceraldehyde 3-phosphate = dihydroxyacetone phosphate. The protein operates within carbohydrate biosynthesis; gluconeogenesis. It functions in the pathway carbohydrate degradation; glycolysis; D-glyceraldehyde 3-phosphate from glycerone phosphate: step 1/1. Functionally, involved in the gluconeogenesis. Catalyzes stereospecifically the conversion of dihydroxyacetone phosphate (DHAP) to D-glyceraldehyde-3-phosphate (G3P). This is Triosephosphate isomerase from Mesomycoplasma hyopneumoniae (strain 232) (Mycoplasma hyopneumoniae).